The following is a 483-amino-acid chain: Probable glycosyltransferase 6 (483 aa).

Over 1 to 40 (MAASETAPFGVSAASKGGGGVAGARAQHGQLAVAGRVHDA) the chain is Cytoplasmic. The chain crosses the membrane as a helical; Signal-anchor for type II membrane protein span at residues 41–61 (LVFAAGAVAAVLVLLATASFL). At 62–483 (SPMPVTNLVA…PLPFDYPAAR (422 aa)) the chain is on the lumenal side. Residue asparagine 144 is glycosylated (N-linked (GlcNAc...) asparagine).

Belongs to the glycosyltransferase 34 family.

It is found in the golgi apparatus membrane. Probable glycosyltransferase that may be involved in the biosynthesis of xyloglucan. In Oryza sativa subsp. indica (Rice), this protein is Probable glycosyltransferase 6.